The sequence spans 469 residues: Glutamate--tRNA ligase (469 aa).

A 'HIGH' region motif is present at residues proline 11–asparagine 21. A 'KMSKS' region motif is present at residues lysine 243–arginine 247. Lysine 246 contributes to the ATP binding site.

Belongs to the class-I aminoacyl-tRNA synthetase family. Glutamate--tRNA ligase type 1 subfamily. In terms of assembly, monomer.

The protein localises to the cytoplasm. The enzyme catalyses tRNA(Glu) + L-glutamate + ATP = L-glutamyl-tRNA(Glu) + AMP + diphosphate. In terms of biological role, catalyzes the attachment of glutamate to tRNA(Glu) in a two-step reaction: glutamate is first activated by ATP to form Glu-AMP and then transferred to the acceptor end of tRNA(Glu). This Burkholderia orbicola (strain AU 1054) protein is Glutamate--tRNA ligase.